A 761-amino-acid chain; its full sequence is Nitrogen fixation protein FixI (761 aa).

The Cytoplasmic segment spans residues 1–120 (MSCCTMDAES…SAPESDKTRN (120 aa)). The 71-residue stretch at 36 to 106 (RQLDLSVSDV…EINSAGYRAH (71 aa)) folds into the HMA domain. A metal cation contacts are provided by cysteine 47 and cysteine 50. A helical transmembrane segment spans residues 121 to 142 (QLLLAIGVSGFAAPNIMLLSVS). Topologically, residues 143-155 (VWSGADAATRDMF) are extracellular. The helical transmembrane segment at 156–177 (HWISAMIAAPALVYAGRFFFKS) threads the bilayer. The Cytoplasmic segment spans residues 178–184 (AWNALRH). Residues 185–205 (GRTNMDVPISVTVSLSYAVSL) form a helical membrane-spanning segment. Residues 206–217 (WETVHHGEHAWF) lie on the Extracellular side of the membrane. A helical membrane pass occupies residues 218–238 (DASVSLLFFLLIGRTLDHIMR). Residues 239-367 (EKARAAINGL…RARYRRIADR (129 aa)) are Cytoplasmic-facing. The chain crosses the membrane as a helical span at residues 368–390 (AATLYSPVVHLLALVSFLAWGFL). Residues 391 to 395 (GGDWK) are Extracellular-facing. A helical transmembrane segment spans residues 396-415 (QAMLVAVAVLIITCPCALGL). At 416–691 (AVPVVQVVAA…AVARRSASLI (276 aa)) the chain is on the cytoplasmic side. Catalysis depends on aspartate 453, which acts as the 4-aspartylphosphate intermediate. Aspartate 637 and aspartate 641 together coordinate Mg(2+). A helical membrane pass occupies residues 692 to 711 (RQNFALAIGYNVLAVPIAIA). Residues 712–716 (GLATP) are Extracellular-facing. The chain crosses the membrane as a helical span at residues 717–735 (LIAAVAMSTSSIIVVTNAL). The Cytoplasmic portion of the chain corresponds to 736-761 (RLNGFGKRPDMHIRRGIGRSAEVKAA).

This sequence belongs to the cation transport ATPase (P-type) (TC 3.A.3) family. Type IB subfamily.

It is found in the cell membrane. The catalysed reaction is ATP + H2O = ADP + phosphate + H(+). Its function is as follows. FixI is a pump of a specific cation involved in symbiotic nitrogen fixation. The four proteins FixG, FixH, FixI, and FixS may participate in a membrane-bound complex coupling the FixI cation pump with a redox process catalyzed by FixG. The chain is Nitrogen fixation protein FixI (fixI) from Rhizobium leguminosarum bv. viciae.